The following is a 464-amino-acid chain: Siroheme synthase (464 aa).

Residues 1 to 203 (MKYLPLFHNL…GQGAEAERLL (203 aa)) are precorrin-2 dehydrogenase /sirohydrochlorin ferrochelatase. NAD(+) contacts are provided by residues 22–23 (EI) and 43–44 (PE). Ser128 is subject to Phosphoserine. A uroporphyrinogen-III C-methyltransferase region spans residues 216–464 (GEVYLVGAGP…AWFEGAQGQI (249 aa)). Position 225 (Pro225) interacts with S-adenosyl-L-methionine. The active-site Proton acceptor is Asp248. Lys270 functions as the Proton donor in the catalytic mechanism. S-adenosyl-L-methionine is bound by residues 301–303 (GGD), Ile306, 331–332 (TA), Met383, and Gly412.

It in the N-terminal section; belongs to the precorrin-2 dehydrogenase / sirohydrochlorin ferrochelatase family. The protein in the C-terminal section; belongs to the precorrin methyltransferase family.

The enzyme catalyses uroporphyrinogen III + 2 S-adenosyl-L-methionine = precorrin-2 + 2 S-adenosyl-L-homocysteine + H(+). It catalyses the reaction precorrin-2 + NAD(+) = sirohydrochlorin + NADH + 2 H(+). The catalysed reaction is siroheme + 2 H(+) = sirohydrochlorin + Fe(2+). It functions in the pathway cofactor biosynthesis; adenosylcobalamin biosynthesis; precorrin-2 from uroporphyrinogen III: step 1/1. Its pathway is cofactor biosynthesis; adenosylcobalamin biosynthesis; sirohydrochlorin from precorrin-2: step 1/1. It participates in porphyrin-containing compound metabolism; siroheme biosynthesis; precorrin-2 from uroporphyrinogen III: step 1/1. The protein operates within porphyrin-containing compound metabolism; siroheme biosynthesis; siroheme from sirohydrochlorin: step 1/1. It functions in the pathway porphyrin-containing compound metabolism; siroheme biosynthesis; sirohydrochlorin from precorrin-2: step 1/1. Multifunctional enzyme that catalyzes the SAM-dependent methylations of uroporphyrinogen III at position C-2 and C-7 to form precorrin-2 via precorrin-1. Then it catalyzes the NAD-dependent ring dehydrogenation of precorrin-2 to yield sirohydrochlorin. Finally, it catalyzes the ferrochelation of sirohydrochlorin to yield siroheme. The sequence is that of Siroheme synthase from Pseudomonas fluorescens (strain Pf0-1).